The chain runs to 69 residues: Conotoxin Cal12.1p5 (69 aa).

A propeptide spanning residues 1–23 (DLITNSYTRGKPRHVTSWRNLKT) is cleaved from the precursor.

Post-translationally, contains 4 disulfide bonds. As to expression, expressed by the venom duct.

Its subcellular location is the secreted. The chain is Conotoxin Cal12.1p5 from Californiconus californicus (California cone).